The sequence spans 286 residues: UPF0173 metal-dependent hydrolase RALTA_A1748 (286 aa).

It belongs to the UPF0173 family.

The polypeptide is UPF0173 metal-dependent hydrolase RALTA_A1748 (Cupriavidus taiwanensis (strain DSM 17343 / BCRC 17206 / CCUG 44338 / CIP 107171 / LMG 19424 / R1) (Ralstonia taiwanensis (strain LMG 19424))).